Reading from the N-terminus, the 199-residue chain is Adenylyl-sulfate kinase (199 aa).

The tract at residues 1–21 (MSQSSNITWHDSEVTKSDRQQ) is disordered. Residues 10–19 (HDSEVTKSDR) show a composition bias toward basic and acidic residues. ATP is bound at residue 34-41 (GLSGSGKS). Catalysis depends on serine 108, which acts as the Phosphoserine intermediate.

It belongs to the APS kinase family.

It carries out the reaction adenosine 5'-phosphosulfate + ATP = 3'-phosphoadenylyl sulfate + ADP + H(+). It participates in sulfur metabolism; hydrogen sulfide biosynthesis; sulfite from sulfate: step 2/3. Catalyzes the synthesis of activated sulfate. This Staphylococcus haemolyticus (strain JCSC1435) protein is Adenylyl-sulfate kinase.